Here is a 231-residue protein sequence, read N- to C-terminus: NADH-ubiquinone oxidoreductase chain 4 (231 aa).

6 helical membrane-spanning segments follow: residues 1-21 (PIAG…YGII), 34-54 (MFLP…LTCL), 63-85 (IAYS…TPWG), 89-111 (AMTL…NTTY), 128-148 (ILPM…AIPP), and 156-176 (LLIM…LGLS).

Belongs to the complex I subunit 4 family.

The protein resides in the mitochondrion membrane. The enzyme catalyses a ubiquinone + NADH + 5 H(+)(in) = a ubiquinol + NAD(+) + 4 H(+)(out). Its function is as follows. Core subunit of the mitochondrial membrane respiratory chain NADH dehydrogenase (Complex I) that is believed to belong to the minimal assembly required for catalysis. Complex I functions in the transfer of electrons from NADH to the respiratory chain. The immediate electron acceptor for the enzyme is believed to be ubiquinone. The polypeptide is NADH-ubiquinone oxidoreductase chain 4 (MT-ND4) (Gloydius intermedius (Central Asian pit viper)).